A 558-amino-acid chain; its full sequence is uncharacterized protein (558 aa).

The next 6 membrane-spanning stretches (helical) occupy residues leucine 63 to tyrosine 83, valine 90 to isoleucine 110, valine 143 to glycine 163, valine 168 to cysteine 188, serine 226 to valine 246, and valine 258 to tryptophan 278. In terms of domain architecture, HAMP spans leucine 279 to arginine 330. The 125-residue stretch at alanine 362–cysteine 486 folds into the Guanylate cyclase domain. The disordered stretch occupies residues threonine 529–glycine 558. Positions threonine 545–glycine 558 are enriched in basic and acidic residues.

The protein belongs to the adenylyl cyclase class-3 family.

Its subcellular location is the cell membrane. This is an uncharacterized protein from Mycobacterium tuberculosis (strain CDC 1551 / Oshkosh).